A 411-amino-acid chain; its full sequence is O-glucosyltransferase rumi (411 aa).

The signal sequence occupies residues 1–20; it reads MLINHLIVVLLISLVGTGGA. 4 disulfide bridges follow: cysteine 64–cysteine 75, cysteine 73–cysteine 378, cysteine 120–cysteine 126, and cysteine 282–cysteine 305. Catalysis depends on aspartate 151, which acts as the Proton donor/acceptor. The tract at residues 192–197 is interaction with the consensus sequence C-X-S-X-[PA]-C in peptide substrates; sequence ATKLHP. UDP-alpha-D-glucose contacts are provided by residues 229–233, arginine 237, 276–278, and 294–298; these read RGSRT, VSF, and AASFR. The Prevents secretion from ER signature appears at 408–411; the sequence is KDEL.

It belongs to the glycosyltransferase 90 family.

Its subcellular location is the endoplasmic reticulum lumen. It participates in protein modification; protein glycosylation. Its function is as follows. Protein O-glucosyltransferase. Catalyzes the reaction that attaches glucose through an O-glycosidic linkage to a conserved serine residue found in the consensus sequence C-X-S-X-[PA]-C in epidermal growth factor-like repeats. Regulates Notch signaling by glucosylating Notch in the ER, glucosylation is required for the correct folding and cleavage of Notch. The chain is O-glucosyltransferase rumi from Drosophila melanogaster (Fruit fly).